The sequence spans 700 residues: Methionine synthase reductase (700 aa).

Residues 4–147 form the Flavodoxin-like domain; that stretch reads FLLLYATQRG…VVEPWIDGLW (144 aa). FMN is bound by residues 10–14 and 93–124; these read TQRGQ and LLGL…QHFY. The tract at residues 168–247 is hinge; that stretch reads TLAQASDAPL…SSLSIPAVSP (80 aa). A phosphoserine mark is found at Ser173 and Ser190. The FAD-binding FR-type domain maps to 272–534; that stretch reads DPIFQVPISK…PRATNSFHLP (263 aa). An NADP(+)-binding site is contributed by Lys292. FAD contacts are provided by residues 452–455 and 488–491; these read RPYS and GVCT. Residues 611 to 612, 626 to 628, and Asp661 contribute to the NADP(+) site; these read SR and YVQ. Residue Trp699 participates in FAD binding.

As to quaternary structure, forms a multiprotein complex with MMACHC, MMADHC and MTR. It depends on FAD as a cofactor. FMN serves as cofactor.

The protein resides in the cytoplasm. It carries out the reaction 2 methylcob(III)alamin-[methionine synthase] + 2 S-adenosyl-L-homocysteine + NADP(+) + H(+) = 2 cob(II)alamin-[methionine synthase] + 2 S-adenosyl-L-methionine + NADPH. The enzyme catalyses 2 cob(II)alamin + A + 2 H2O + 2 H(+) = 2 aquacob(III)alamin + AH2. In terms of biological role, key enzyme in methionine and folate homeostasis responsible for the reactivation of methionine synthase (MTR/MS) activity by catalyzing the reductive methylation of MTR-bound cob(II)alamin. Cobalamin (vitamin B12) forms a complex with MTR to serve as an intermediary in methyl transfer reactions that cycles between MTR-bound methylcob(III)alamin and MTR bound-cob(I)alamin forms, and occasional oxidative escape of the cob(I)alamin intermediate during the catalytic cycle leads to the inactive cob(II)alamin species. The processing of cobalamin in the cytosol occurs in a multiprotein complex composed of at least MMACHC, MMADHC, MTRR and MTR which may contribute to shuttle safely and efficiently cobalamin towards MTR in order to produce methionine. Also necessary for the utilization of methyl groups from the folate cycle, thereby affecting transgenerational epigenetic inheritance. Also acts as a molecular chaperone for methionine synthase by stabilizing apoMTR and incorporating methylcob(III)alamin into apoMTR to form the holoenzyme. Also serves as an aquacob(III)alamin reductase by reducing aquacob(III)alamin to cob(II)alamin; this reduction leads to stimulation of the conversion of apoMTR and aquacob(III)alamin to MTR holoenzyme. This Rattus norvegicus (Rat) protein is Methionine synthase reductase (Mtrr).